Here is a 503-residue protein sequence, read N- to C-terminus: AMP phosphorylase (503 aa).

AMP is bound by residues glycine 168, 194–199, and threonine 203; that span reads SRAITS. The active-site Proton donor is aspartate 256. AMP-binding residues include serine 264 and lysine 288.

The protein belongs to the thymidine/pyrimidine-nucleoside phosphorylase family. Type 2 subfamily.

It catalyses the reaction AMP + phosphate = alpha-D-ribose 1,5-bisphosphate + adenine. It carries out the reaction CMP + phosphate = cytosine + alpha-D-ribose 1,5-bisphosphate. The catalysed reaction is UMP + phosphate = alpha-D-ribose 1,5-bisphosphate + uracil. In terms of biological role, catalyzes the conversion of AMP and phosphate to adenine and ribose 1,5-bisphosphate (R15P). Exhibits phosphorylase activity toward CMP and UMP in addition to AMP. Functions in an archaeal AMP degradation pathway, together with R15P isomerase and RubisCO. The protein is AMP phosphorylase of Methanocaldococcus jannaschii (strain ATCC 43067 / DSM 2661 / JAL-1 / JCM 10045 / NBRC 100440) (Methanococcus jannaschii).